The sequence spans 287 residues: UTP--glucose-1-phosphate uridylyltransferase 1 (287 aa).

This sequence belongs to the UDPGP type 2 family.

The catalysed reaction is alpha-D-glucose 1-phosphate + UTP + H(+) = UDP-alpha-D-glucose + diphosphate. It functions in the pathway glycolipid metabolism; diglucosyl-diacylglycerol biosynthesis. Functionally, catalyzes the formation of UDP-glucose from glucose-1-phosphate and UTP. This is an intermediate step in the biosynthesis of diglucosyl-diacylglycerol (Glc2-DAG), i.e. a glycolipid found in the membrane, which is also used as a membrane anchor for lipoteichoic acid (LTA). The chain is UTP--glucose-1-phosphate uridylyltransferase 1 (gtaB1) from Staphylococcus saprophyticus subsp. saprophyticus (strain ATCC 15305 / DSM 20229 / NCIMB 8711 / NCTC 7292 / S-41).